The chain runs to 277 residues: Histone-lysine N-methyltransferase set-17 (277 aa).

Positions 135 to 246 (FRIEESKLPN…INQELLVWYG (112 aa)) constitute an SET domain. S-adenosyl-L-methionine is bound at residue Y245.

The protein belongs to the class V-like SAM-binding methyltransferase superfamily. As to expression, expressed in the germline. Predominantly expressed in primary spermatocytes. Also expressed in the oocyte-producing germline of hermaphrodites.

The protein localises to the nucleus. It catalyses the reaction N(6)-methyl-L-lysyl(4)-[histone H3] + S-adenosyl-L-methionine = N(6),N(6)-dimethyl-L-lysyl(4)-[histone H3] + S-adenosyl-L-homocysteine + H(+). It carries out the reaction L-lysyl(4)-[histone H3] + S-adenosyl-L-methionine = N(6)-methyl-L-lysyl(4)-[histone H3] + S-adenosyl-L-homocysteine + H(+). In terms of biological role, histone methyltransferase that specifically mono- and di-methylates 'Lys-4' of histone H3 in vitro. Does not tri-methylate 'Lys-4' of histone H3 in vitro. Promotes spermatid development and fertility by positively regulating the transcription of spermatocyte-specific genes in primary spermatocytes. Together with spr-5, required for transgenerational fertility. The sequence is that of Histone-lysine N-methyltransferase set-17 from Caenorhabditis elegans.